Here is a 362-residue protein sequence, read N- to C-terminus: Vignain (362 aa).

An N-terminal signal peptide occupies residues 1-20 (MAMKKLLWVVLSLSLVLGVA). The propeptide at 21-126 (NSFDFHEKDL…SGTFMYEKVG (106 aa)) is activation peptide. 3 disulfide bridges follow: Cys149/Cys191, Cys183/Cys224, and Cys282/Cys334. Residue Cys152 is part of the active site. Active-site residues include His288 and Asn309. Residues Asn326 and Asn346 are each glycosylated (N-linked (GlcNAc...) asparagine). The propeptide at 353 to 362 (GSLSSPKDEL) is removed in mature form. The Prevents secretion from ER motif lies at 359-362 (KDEL).

Belongs to the peptidase C1 family. Post-translationally, the mature protein is not glycosylated. The precursor stored in the endoplasmic reticulum lumen is processed during the transport to proteins bodies to two dominant mature forms that differ by a single amino acid residue at the N-terminus.

The protein resides in the endoplasmic reticulum lumen. The protein localises to the vacuole. It localises to the aleurone grain. Thought to be involved in the hydrolysis of stored seed proteins. In vitro, catalyzes the hydrolysis of proteins, such as azocasein. Shows a preferential cleavage for Asn-|-Xaa in small molecule substrates such as Boc-Asn-|-OPHNO(2). The chain is Vignain from Vigna mungo (Black gram).